The following is a 121-amino-acid chain: uncharacterized protein (121 aa).

Over residues 12–24 (EEGGASAAAPDAS) the composition is skewed to low complexity. Disordered regions lie at residues 12-63 (EEGG…RLEP) and 101-121 (KKLAQQPPRLEGSQKERSPVV). Positions 26 to 35 (KSKKGARPCF) are enriched in basic residues. Over residues 40–49 (QAGSCMTGRQ) the composition is skewed to polar residues. The segment covering 112–121 (GSQKERSPVV) has biased composition (basic and acidic residues).

This is an uncharacterized protein from Homo sapiens (Human).